Reading from the N-terminus, the 219-residue chain is Elongation factor Ts (219 aa).

An involved in Mg(2+) ion dislocation from EF-Tu region spans residues 82 to 85 (TDFV).

It belongs to the EF-Ts family.

The protein localises to the cytoplasm. In terms of biological role, associates with the EF-Tu.GDP complex and induces the exchange of GDP to GTP. It remains bound to the aminoacyl-tRNA.EF-Tu.GTP complex up to the GTP hydrolysis stage on the ribosome. This chain is Elongation factor Ts, found in Anaeromyxobacter sp. (strain Fw109-5).